The chain runs to 251 residues: MTLNKQQLTLNCDMGESFGSWKMGADDSVMPHVDMANIACGFHASDPNVMHDTITLANLHDVDIGAHPGYPDLQGFGRRSLSMSSDEITNMVIYQVGALQALCRAQYTDIGYIKPHGALYNDMMKSDAVFRAVVKAAALFKVPLMILASQENEKYLEIADDYDVPLLFEAFADRLYQDDGMLTPRRHPNAVLKDELAILEQVRTLADSGRVKTASGSYILLEADTICVHGDNEESIALIQKIRQSLYSGGN.

It belongs to the LamB/PxpA family. As to quaternary structure, forms a complex composed of PxpA, PxpB and PxpC.

The catalysed reaction is 5-oxo-L-proline + ATP + 2 H2O = L-glutamate + ADP + phosphate + H(+). Its function is as follows. Catalyzes the cleavage of 5-oxoproline to form L-glutamate coupled to the hydrolysis of ATP to ADP and inorganic phosphate. The sequence is that of 5-oxoprolinase subunit A from Vibrio parahaemolyticus serotype O3:K6 (strain RIMD 2210633).